A 217-amino-acid chain; its full sequence is MIRNELIDQLARTQASALETQGLGLVPMVVEQSGRGERAYDIYSRLLKERVIFMVGEVNDQTANLVVAQLLFLESENPDKDISLYINSPGGSVSAGLAMYDTMQFVKPDVSTLCMGMAASMGAFLLAAGAKGKRYALPNSRIMIHQPLGGARGQASDIEIQAREILYLRERLNTILSEVTGQPVDKIARDTDRDNFMSGDQAKEYGLIDKVLARRGA.

S120 functions as the Nucleophile in the catalytic mechanism. Residue H145 is part of the active site.

Belongs to the peptidase S14 family. Fourteen ClpP subunits assemble into 2 heptameric rings which stack back to back to give a disk-like structure with a central cavity, resembling the structure of eukaryotic proteasomes.

It is found in the cytoplasm. The enzyme catalyses Hydrolysis of proteins to small peptides in the presence of ATP and magnesium. alpha-casein is the usual test substrate. In the absence of ATP, only oligopeptides shorter than five residues are hydrolyzed (such as succinyl-Leu-Tyr-|-NHMec, and Leu-Tyr-Leu-|-Tyr-Trp, in which cleavage of the -Tyr-|-Leu- and -Tyr-|-Trp bonds also occurs).. Cleaves peptides in various proteins in a process that requires ATP hydrolysis. Has a chymotrypsin-like activity. Plays a major role in the degradation of misfolded proteins. This chain is ATP-dependent Clp protease proteolytic subunit, found in Ralstonia nicotianae (strain ATCC BAA-1114 / GMI1000) (Ralstonia solanacearum).